An 806-amino-acid chain; its full sequence is Leucine--tRNA ligase (806 aa).

The 'HIGH' region motif lies at 40–51 (PYPSGKGLHVGH). Positions 580 to 584 (KMSKS) match the 'KMSKS' region motif. Lys583 contributes to the ATP binding site.

Belongs to the class-I aminoacyl-tRNA synthetase family.

The protein localises to the cytoplasm. The catalysed reaction is tRNA(Leu) + L-leucine + ATP = L-leucyl-tRNA(Leu) + AMP + diphosphate. The polypeptide is Leucine--tRNA ligase (Ureaplasma urealyticum serovar 10 (strain ATCC 33699 / Western)).